The primary structure comprises 183 residues: Transcription factor 15 (183 aa).

Residues 24 to 46 form a disordered region; sequence DEENRSESDTSDQSYGCCEGAEA. The bHLH domain occupies 61 to 113; the sequence is KQRQAANARERDRTQSVNTAFTALRTLIPTEPVDRKLSKIETLRLASSYIAHL.

Heterodimer; efficient DNA binding requires dimerization with another bHLH protein.

Its subcellular location is the nucleus. In terms of biological role, early transcription factor that plays a key role in somitogenesis, paraxial mesoderm development and regulation of stem cell pluripotency. Essential for the mesenchymal to epithelial transition associated with somite formation. Required for somite morphogenesis, thereby regulating patterning of the axial skeleton and skeletal muscles. Also plays a key role in regulation of stem cell pluripotency. Promotes pluripotency exit of embryonic stem cells (ESCs) by priming ESCs for differentiation. Acts as a key regulator of self-renewal of hematopoietic stem cells (HSCs) by mediating HSCs quiescence and long-term self-renewal. Acts by forming a heterodimer with another helix-loop-helix (bHLH) protein, that binds DNA on E-box motifs (5'-CANNTG-3') and activates transcription of target genes. The polypeptide is Transcription factor 15 (TCF15) (Gallus gallus (Chicken)).